The sequence spans 42 residues: Photosystem I reaction center subunit IX (42 aa).

A helical transmembrane segment spans residues 8 to 28 (YLSTIPVVGAIWLTFTAGFII).

Belongs to the PsaJ family.

The protein resides in the plastid. The protein localises to the chloroplast thylakoid membrane. Functionally, may help in the organization of the PsaE and PsaF subunits. This is Photosystem I reaction center subunit IX from Gracilaria tenuistipitata var. liui (Red alga).